Reading from the N-terminus, the 400-residue chain is Argininosuccinate synthase (400 aa).

8-16 (AYSGGLDTS) is a binding site for ATP. Tyrosine 87 serves as a coordination point for L-citrulline. Glycine 117 provides a ligand contact to ATP. Residues threonine 119, asparagine 123, and aspartate 124 each contribute to the L-aspartate site. Asparagine 123 contributes to the L-citrulline binding site. Arginine 127, serine 175, glutamate 260, and tyrosine 272 together coordinate L-citrulline.

Belongs to the argininosuccinate synthase family. Type 1 subfamily. As to quaternary structure, homotetramer.

It is found in the cytoplasm. The enzyme catalyses L-citrulline + L-aspartate + ATP = 2-(N(omega)-L-arginino)succinate + AMP + diphosphate + H(+). The protein operates within amino-acid biosynthesis; L-arginine biosynthesis; L-arginine from L-ornithine and carbamoyl phosphate: step 2/3. In Mycolicibacterium vanbaalenii (strain DSM 7251 / JCM 13017 / BCRC 16820 / KCTC 9966 / NRRL B-24157 / PYR-1) (Mycobacterium vanbaalenii), this protein is Argininosuccinate synthase.